A 392-amino-acid chain; its full sequence is Adenine nucleotide transporter BT1, chloroplastic/mitochondrial (392 aa).

Solcar repeat units follow at residues 108–191 (NPSL…VNKK), 202–286 (IPIP…LRKA), and 296–384 (IGNI…CKKI). Helical transmembrane passes span 113-133 (RLLSGAVAGAVSRTVVAPLET), 168-188 (LVNVIRVAPARAVELFVFETV), 204-224 (IPASLLAGACAGVSQTLLTYP), 263-283 (APSLIGVVPYAATNYFAYDSL), 302-322 (LLIGSLAGALSSTATFPLEVA), and 359-379 (GLGPSCLKLVPAAGISFMCYE).

This sequence belongs to the mitochondrial carrier (TC 2.A.29) family. In terms of tissue distribution, expressed in root tips, the central cylinder of young roots, and maturating and germinating pollen.

The protein localises to the plastid. It localises to the chloroplast inner membrane. It is found in the mitochondrion inner membrane. Inhibited by pyridoxal 5-phosphate but not mersalyl. Its function is as follows. Probable mitochondrial adenylate carrier that catalyzes the transport of ATP, ADP and AMP, but not ADP-glucose. Recombinant BT1 shows a unidirectional mode of transport in intact E.coli cells. May function as a plastidial nucleotide uniport carrier required to export newly synthesized adenylates into the cytosol. May be involved in abiotic stress response. The polypeptide is Adenine nucleotide transporter BT1, chloroplastic/mitochondrial (BT1) (Arabidopsis thaliana (Mouse-ear cress)).